Reading from the N-terminus, the 173-residue chain is MIVLNDRIIPWQPTVIAGPKQAMLVTPETATMMIKKARRPLMVVGPLAKRQEVLEHTVKIIRHFDLPVVATADTYRALSEAGIESEPHGIVEITNLLKDPSWEGIRGEGQHDLVIFIGCIYYIASQGLSSLKHFAPHIKTLTICKTFHSNADASFPNMDDDEWFRYLEKMYAE.

This sequence belongs to the CdhB family. In terms of assembly, heterotetramer of two alpha and two epsilon subunits. The ACDS complex is made up of alpha, epsilon, beta, gamma and delta subunits with a probable stoichiometry of (alpha(2)epsilon(2))(4)-beta(8)-(gamma(1)delta(1))(8).

The protein operates within one-carbon metabolism; methanogenesis from acetate. Functionally, part of a complex that catalyzes the reversible cleavage of acetyl-CoA, allowing growth on acetate as sole source of carbon and energy. The alpha-epsilon subcomponent functions as a carbon monoxide dehydrogenase. The precise role of the epsilon subunit is unclear; it may have a stabilizing role within the alpha(2)epsilon(2) component and/or be involved in electron transfer to FAD during a potential FAD-mediated CO oxidation. The chain is Acetyl-CoA decarbonylase/synthase complex subunit epsilon from Methanothermobacter thermautotrophicus (strain ATCC 29096 / DSM 1053 / JCM 10044 / NBRC 100330 / Delta H) (Methanobacterium thermoautotrophicum).